Reading from the N-terminus, the 242-residue chain is Protein HTATIP2 (242 aa).

Ala2 is modified (N-acetylalanine). Residues 2–25 form a required for interaction with elongation factor EEF1A1 region; it reads ADKETLLKLREDFKMQNKSVFILG. Ser27, Gly28, Glu29, Thr30, Arg52, Arg53, Leu92, Gly93, Tyr143, Lys147, Leu170, and Arg178 together coordinate NADPH. Tyr143 functions as the Proton acceptor in the catalytic mechanism. The active site involves Lys147.

In terms of assembly, monomer. Forms homodimers during oxidative stress. Interacts (via N-terminus) with elongation factor EEF1A1 (via middle-region); the interaction is direct and competes with EEF1A1 binding to guanyl-nucleotide exchange factor EEF1B2, thereby inhibiting GDP for GTP exchange and reactivation of EEF1A1. Interacts with nuclear transport receptors XPO4, IPO5/RANBP5, IPO7, IPO9 and KPNB1 as well as GCN1L1/GCN1 and LRPPRC probably through their HEAT repeats. Binds NCOA5/CIA.

In terms of biological role, represses translation by preventing reactivation of elongation factor eEF1A. May also inhibit nuclear import by competing with nuclear import substrates for binding to a subset of nuclear transport receptors. Has additionally been proposed to act as a redox sensor involved in cellular oxidative stress surveillance. May bind NADPH. In Rattus norvegicus (Rat), this protein is Protein HTATIP2.